A 180-amino-acid polypeptide reads, in one-letter code: Inner membrane-spanning protein YciB (180 aa).

5 helical membrane passes run 22–42 (IYVA…LTWL), 50–70 (MTLI…VFHN), 76–96 (WKVT…QVVL), 121–141 (AAWA…AFWL), and 149–169 (FKVF…GIYI).

Belongs to the YciB family.

The protein resides in the cell inner membrane. Its function is as follows. Plays a role in cell envelope biogenesis, maintenance of cell envelope integrity and membrane homeostasis. In Edwardsiella ictaluri (strain 93-146), this protein is Inner membrane-spanning protein YciB.